Consider the following 339-residue polypeptide: UDP-3-O-acylglucosamine N-acyltransferase (339 aa).

The active-site Proton acceptor is the His239.

The protein belongs to the transferase hexapeptide repeat family. LpxD subfamily. Homotrimer.

It catalyses the reaction a UDP-3-O-[(3R)-3-hydroxyacyl]-alpha-D-glucosamine + a (3R)-hydroxyacyl-[ACP] = a UDP-2-N,3-O-bis[(3R)-3-hydroxyacyl]-alpha-D-glucosamine + holo-[ACP] + H(+). It functions in the pathway bacterial outer membrane biogenesis; LPS lipid A biosynthesis. In terms of biological role, catalyzes the N-acylation of UDP-3-O-acylglucosamine using 3-hydroxyacyl-ACP as the acyl donor. Is involved in the biosynthesis of lipid A, a phosphorylated glycolipid that anchors the lipopolysaccharide to the outer membrane of the cell. The protein is UDP-3-O-acylglucosamine N-acyltransferase of Aliivibrio fischeri (strain ATCC 700601 / ES114) (Vibrio fischeri).